A 251-amino-acid chain; its full sequence is Chloride intracellular channel protein 5 (251 aa).

Residues 1-98 (MTDSATTNGD…EEFLEETLTP (98 aa)) are required for insertion into the membrane. Positions 32 to 35 (CPFS) match the G-site motif. A helical membrane pass occupies residues 34-54 (FSQRLFMILWLKGVVFNVTTV). The 141-residue stretch at 101–241 (YPKLAAKHRE…AADSEIELAY (141 aa)) folds into the GST C-terminal domain.

It belongs to the chloride channel CLIC family. Component of a multimeric complex consisting of several cytoskeletal proteins, including actin, ezrin, alpha-actinin, gelsolin, and IQGAP1. Interacts with AKAP9. Interacts with TPRN. TPRN, CLIC5 and PTPQR form concentric rings at the base of stereocilia and may form a complex. Interacts with EZR, MYO6 and RDX; the proteins may work together as a complex to stabilize linkages between the plasma membrane and subjacent actin cytoskeleton at the stereocilium base. In terms of tissue distribution, detected in lung and inner ear. Detected in embryonic cochlea, on microvilli-covered apical surfaces of interdental cells, columnar cells of Kolliker's organ, and on stereocilia of inner and outer hair cells (at protein level). Also detected in the eye, where it localizes to lens fiber cells in the lens epithelium (at protein level).

Its subcellular location is the golgi apparatus. The protein resides in the cytoplasm. It localises to the cytoskeleton. It is found in the microtubule organizing center. The protein localises to the centrosome. Its subcellular location is the cell cortex. The protein resides in the membrane. It localises to the apical cell membrane. It is found in the mitochondrion. The protein localises to the cell projection. Its subcellular location is the stereocilium. It catalyses the reaction Na(+)(in) = Na(+)(out). The enzyme catalyses K(+)(in) = K(+)(out). It carries out the reaction chloride(in) = chloride(out). With respect to regulation, inhibited by F-actin. Functionally, in the soluble state, catalyzes glutaredoxin-like thiol disulfide exchange reactions with reduced glutathione as electron donor. Can insert into membranes and form non-selective ion channels almost equally permeable to Na(+), K(+) and Cl(-). Required for normal hearing. Necessary for the formation of stereocilia in the inner ear and normal development of the organ of Corti. Required for the proper localization of PTPRQ and RDX to the stereocilium base during postnatal maturation of hair bundles. Can insert into membranes and form poorly selective ion channels that may also transport chloride ions. Required for the development and/or maintenance of the proper glomerular endothelial cell and podocyte architecture. Plays a role in formation of the lens suture in the eye, which is important for normal optical properties of the lens. In Mus musculus (Mouse), this protein is Chloride intracellular channel protein 5 (Clic5).